The following is a 298-amino-acid chain: GTP cyclohydrolase FolE2 (298 aa).

Belongs to the GTP cyclohydrolase IV family.

The enzyme catalyses GTP + H2O = 7,8-dihydroneopterin 3'-triphosphate + formate + H(+). Its pathway is cofactor biosynthesis; 7,8-dihydroneopterin triphosphate biosynthesis; 7,8-dihydroneopterin triphosphate from GTP: step 1/1. Functionally, converts GTP to 7,8-dihydroneopterin triphosphate. The chain is GTP cyclohydrolase FolE2 from Xylella fastidiosa (strain M12).